The primary structure comprises 79 residues: Defensin-like protein 109 (79 aa).

A signal peptide spans 1–24 (MDFTKKILVVFAFTIMLGISSVHC). Cystine bridges form between Cys41/Cys76, Cys47/Cys68, Cys54/Cys74, and Cys58/Cys75.

The protein belongs to the DEFL family.

It is found in the secreted. The chain is Defensin-like protein 109 from Arabidopsis thaliana (Mouse-ear cress).